A 123-amino-acid polypeptide reads, in one-letter code: Large ribosomal subunit protein uL14 (123 aa).

This sequence belongs to the universal ribosomal protein uL14 family. Part of the 50S ribosomal subunit. Forms a cluster with proteins L3 and L19. In the 70S ribosome, L14 and L19 interact and together make contacts with the 16S rRNA in bridges B5 and B8.

In terms of biological role, binds to 23S rRNA. Forms part of two intersubunit bridges in the 70S ribosome. This chain is Large ribosomal subunit protein uL14, found in Yersinia pestis bv. Antiqua (strain Antiqua).